Here is a 94-residue protein sequence, read N- to C-terminus: Protein RnfH (94 aa).

Belongs to the UPF0125 (RnfH) family.

The protein is Protein RnfH of Serratia proteamaculans (strain 568).